A 166-amino-acid polypeptide reads, in one-letter code: Orotate phosphoribosyltransferase (166 aa).

Residues arginine 83, lysine 84, arginine 86, histidine 88, and 108-116 (EDVVTTGNS) contribute to the 5-phospho-alpha-D-ribose 1-diphosphate site. Orotate-binding residues include threonine 112 and arginine 140.

This sequence belongs to the purine/pyrimidine phosphoribosyltransferase family. PyrE subfamily. In terms of assembly, homodimer. Mg(2+) is required as a cofactor.

It catalyses the reaction orotidine 5'-phosphate + diphosphate = orotate + 5-phospho-alpha-D-ribose 1-diphosphate. The protein operates within pyrimidine metabolism; UMP biosynthesis via de novo pathway; UMP from orotate: step 1/2. Catalyzes the transfer of a ribosyl phosphate group from 5-phosphoribose 1-diphosphate to orotate, leading to the formation of orotidine monophosphate (OMP). This chain is Orotate phosphoribosyltransferase, found in Thermoplasma volcanium (strain ATCC 51530 / DSM 4299 / JCM 9571 / NBRC 15438 / GSS1).